The primary structure comprises 377 residues: Chaperone protein DnaJ (377 aa).

The 66-residue stretch at cysteine 8–glycine 73 folds into the J domain. The CR-type zinc finger occupies glycine 135 to glutamate 213. Residues cysteine 148, cysteine 151, cysteine 165, cysteine 168, cysteine 187, cysteine 190, cysteine 201, and cysteine 204 each contribute to the Zn(2+) site. CXXCXGXG motif repeat units follow at residues cysteine 148–glycine 155, cysteine 165–glycine 172, cysteine 187–glycine 194, and cysteine 201–glycine 208.

It belongs to the DnaJ family. Homodimer. Zn(2+) is required as a cofactor.

It localises to the cytoplasm. In terms of biological role, participates actively in the response to hyperosmotic and heat shock by preventing the aggregation of stress-denatured proteins and by disaggregating proteins, also in an autonomous, DnaK-independent fashion. Unfolded proteins bind initially to DnaJ; upon interaction with the DnaJ-bound protein, DnaK hydrolyzes its bound ATP, resulting in the formation of a stable complex. GrpE releases ADP from DnaK; ATP binding to DnaK triggers the release of the substrate protein, thus completing the reaction cycle. Several rounds of ATP-dependent interactions between DnaJ, DnaK and GrpE are required for fully efficient folding. Also involved, together with DnaK and GrpE, in the DNA replication of plasmids through activation of initiation proteins. This is Chaperone protein DnaJ from Bradyrhizobium diazoefficiens (strain JCM 10833 / BCRC 13528 / IAM 13628 / NBRC 14792 / USDA 110).